The following is a 377-amino-acid chain: Putative glutamate--cysteine ligase 2 (377 aa).

It belongs to the glutamate--cysteine ligase type 2 family. YbdK subfamily.

The enzyme catalyses L-cysteine + L-glutamate + ATP = gamma-L-glutamyl-L-cysteine + ADP + phosphate + H(+). Its function is as follows. ATP-dependent carboxylate-amine ligase which exhibits weak glutamate--cysteine ligase activity. The chain is Putative glutamate--cysteine ligase 2 from Chromobacterium violaceum (strain ATCC 12472 / DSM 30191 / JCM 1249 / CCUG 213 / NBRC 12614 / NCIMB 9131 / NCTC 9757 / MK).